Reading from the N-terminus, the 514-residue chain is MTDKLIIFDTTLRDGEQSPGASMTKEEKIRIAKHLERMKVDVIEAGFAASSNGDFDAIHTIAGLIKDSTICSLARANDKDIQRAADALKPAESFRIHTFIATSPLHMEKKLRMTPDQVFEQARLAVRFARKFTDNVEFSPEDGSRSDMDFLCRVLEAVIAEGATTINIADTVGYGVPELYGNLVKTLRERIPNSDKAIFSVHCHNDLGMAVANSLAGVKIGGARQIECTINGLGERAGNTSLEEIVMAVKTRKDYFGLDVGIDTSQIVPTSKLVSQITGFVVQPNKAVVGANAFAHASGIHQDGVLKARDTYEIMRAEDVGWTANKIVLGKLSGRNAFKQRLQELGVSLDSESELNAAFMRFKDLADRKAEIFDEDIIAIVSEESALAHEQEHFKFVSLSQHSETGEQPHAKVVFGVEGKEVTGEARGNGPVDATFNAIESEVGSGSELLLYSVNAITTGTQAQGEVTVRLSKSGRIVNGVGTDPDIVAASAKAYISALNKLHSKDDKVNPQRS.

Positions 5-268 (LIIFDTTLRD…DVGIDTSQIV (264 aa)) constitute a Pyruvate carboxyltransferase domain. Residues aspartate 14, histidine 202, histidine 204, and asparagine 239 each contribute to the Mn(2+) site. Positions 395 to 514 (KFVSLSQHSE…KDDKVNPQRS (120 aa)) are regulatory domain.

It belongs to the alpha-IPM synthase/homocitrate synthase family. LeuA type 1 subfamily. As to quaternary structure, homodimer. It depends on Mn(2+) as a cofactor.

The protein localises to the cytoplasm. It catalyses the reaction 3-methyl-2-oxobutanoate + acetyl-CoA + H2O = (2S)-2-isopropylmalate + CoA + H(+). It participates in amino-acid biosynthesis; L-leucine biosynthesis; L-leucine from 3-methyl-2-oxobutanoate: step 1/4. Its function is as follows. Catalyzes the condensation of the acetyl group of acetyl-CoA with 3-methyl-2-oxobutanoate (2-ketoisovalerate) to form 3-carboxy-3-hydroxy-4-methylpentanoate (2-isopropylmalate). The sequence is that of 2-isopropylmalate synthase from Burkholderia lata (strain ATCC 17760 / DSM 23089 / LMG 22485 / NCIMB 9086 / R18194 / 383).